A 320-amino-acid chain; its full sequence is Olfactory receptor 10J1 (320 aa).

The Extracellular segment spans residues 1 to 36; the sequence is MLLCFRFGNQSMKRENFTLITDFVFQGFSSFHEQQI. N-linked (GlcNAc...) asparagine glycans are attached at residues asparagine 9 and asparagine 16. The chain crosses the membrane as a helical span at residues 37–57; it reads TLFGVFLALYILTLAGNIIIV. Residues 58 to 65 lie on the Cytoplasmic side of the membrane; that stretch reads TIIRMDLH. Residues 66–86 traverse the membrane as a helical segment; sequence LHTPMYFFLSMLSTSETVYTL. The Extracellular segment spans residues 87–110; the sequence is VILPRMLSSLVGMSQPISLAGCAT. A disulfide bridge links cysteine 108 with cysteine 199. The chain crosses the membrane as a helical span at residues 111 to 131; it reads QMFFFVTFGITNCFLLTAMGY. The Cytoplasmic portion of the chain corresponds to 132 to 150; it reads DRYVAICNPLRYMVIMNKR. The chain crosses the membrane as a helical span at residues 151 to 171; sequence LRIQLVLGACSIGLIVAITQV. Topologically, residues 172 to 207 are extracellular; it reads TSVFRLPFCARKVPHFFCDIRPVMKLSCIDTTVNEI. A helical transmembrane segment spans residues 208-227; it reads LTLIISVLVLVVPMGLVFIS. Over 228 to 247 the chain is Cytoplasmic; that stretch reads YVLIISTILKIASVEGRKKA. Residues 248 to 268 traverse the membrane as a helical segment; sequence FATCASHLTVVIVHYSCASIA. Topologically, residues 269–281 are extracellular; that stretch reads YLKPKSENTREHD. A helical transmembrane segment spans residues 282-302; the sequence is QLISVTYTVITPLLNPVVYTL. Residues 303-320 are Cytoplasmic-facing; the sequence is RNKEVKDALCRAVGGKFS.

The protein belongs to the G-protein coupled receptor 1 family.

Its subcellular location is the cell membrane. Its function is as follows. Odorant receptor. In Homo sapiens (Human), this protein is Olfactory receptor 10J1 (OR10J1).